The following is a 207-amino-acid chain: Large ribosomal subunit protein uL3 (207 aa).

The interval 113 to 148 (KGKGFQGPIKRHGQSRGPMAHGSRYHRRPGSMGPVA) is disordered.

Belongs to the universal ribosomal protein uL3 family. In terms of assembly, part of the 50S ribosomal subunit. Forms a cluster with proteins L14 and L19.

Its function is as follows. One of the primary rRNA binding proteins, it binds directly near the 3'-end of the 23S rRNA, where it nucleates assembly of the 50S subunit. This Lactococcus lactis subsp. lactis (strain IL1403) (Streptococcus lactis) protein is Large ribosomal subunit protein uL3.